A 312-amino-acid chain; its full sequence is Ribonuclease HIII (312 aa).

The RNase H type-2 domain maps to 95–311 (FNCIGSDEAG…REKAQKILKP (217 aa)). The a divalent metal cation site is built by D101, E102, and D206.

Belongs to the RNase HII family. RnhC subfamily. The cofactor is Mn(2+). It depends on Mg(2+) as a cofactor.

The protein localises to the cytoplasm. It carries out the reaction Endonucleolytic cleavage to 5'-phosphomonoester.. In terms of biological role, endonuclease that specifically degrades the RNA of RNA-DNA hybrids. The protein is Ribonuclease HIII of Staphylococcus aureus (strain MSSA476).